Reading from the N-terminus, the 220-residue chain is UPF0758 protein APL_1970 (220 aa).

One can recognise an MPN domain in the interval 98–220; sequence NINEPYLAVM…YFSFEEEKFR (123 aa). Zn(2+) is bound by residues histidine 169, histidine 171, and aspartate 182. Residues 169 to 182 carry the JAMM motif motif; it reads HNHPSGNCTPSESD.

This sequence belongs to the UPF0758 family.

The sequence is that of UPF0758 protein APL_1970 from Actinobacillus pleuropneumoniae serotype 5b (strain L20).